Consider the following 512-residue polypeptide: Protein singed (512 aa).

This sequence belongs to the fascin family. As to quaternary structure, interacts with Rab35, with stronger binding to the Rab35-GTP form compared to the Rab35-GDP form.

The protein localises to the cytoplasm. Its subcellular location is the cytoskeleton. In terms of biological role, acts as an actin bundling protein. May have a role in the asymmetric organization and/or movement of cytoplasmic components. It has a role in somatic cells during the formation of adult bristles and hairs, and in the female germline during oogenesis. The polypeptide is Protein singed (sn) (Drosophila melanogaster (Fruit fly)).